Reading from the N-terminus, the 25-residue chain is NU-conotoxin-Ltg1a (25 aa).

In terms of processing, contains 2 disulfide bonds. However, cysteine pairing is not critical for peptide binding to melanocortin receptors, since peptides with different pairings have similar potency at the receptors tested. As to expression, expressed by the venom duct.

It localises to the secreted. Functionally, peptide with nanomolar affinity for human melanocortin receptors. The natural disulfide pairing being unknown, the activity of all three possible peptides (with the cysteine pairings 'bead (I-II, III-IV), 'globular' (I-III, II-IV), and 'ribbon' (I-IV, II-III)) have been tested. All three isomers show similar affinities on each human melanocortin subtype (MC1R (~500 nM), MC3R (~100 nM), MC4R (~50 nM), and MC5R (~50 nM)). The sequence is that of NU-conotoxin-Ltg1a from Conus litoglyphus (Lithograph cone).